A 215-amino-acid chain; its full sequence is Pyrrolidone-carboxylate peptidase (215 aa).

Active-site residues include Glu78, Cys141, and His165.

It belongs to the peptidase C15 family. Homotetramer.

The protein resides in the cytoplasm. The catalysed reaction is Release of an N-terminal pyroglutamyl group from a polypeptide, the second amino acid generally not being Pro.. Removes 5-oxoproline from various penultimate amino acid residues except L-proline. The sequence is that of Pyrrolidone-carboxylate peptidase (pcp) from Streptococcus pyogenes serotype M1.